Here is a 211-residue protein sequence, read N- to C-terminus: Small ribosomal subunit protein uS4 (211 aa).

One can recognise an S4 RNA-binding domain in the interval 98–161; it reads RRLDNVVYRL…RDIPFIKENL (64 aa).

Belongs to the universal ribosomal protein uS4 family. Part of the 30S ribosomal subunit. Contacts protein S5. The interaction surface between S4 and S5 is involved in control of translational fidelity.

One of the primary rRNA binding proteins, it binds directly to 16S rRNA where it nucleates assembly of the body of the 30S subunit. In terms of biological role, with S5 and S12 plays an important role in translational accuracy. The chain is Small ribosomal subunit protein uS4 from Aquifex aeolicus (strain VF5).